The chain runs to 175 residues: uncharacterized protein (175 aa).

2 disordered regions span residues 1-32 (MSHK…KLRH) and 156-175 (KQKQ…KYRQ). Residues 14 to 24 (LLSSSSPVAKK) show a composition bias toward low complexity.

This is an uncharacterized protein from Mycoplasma pneumoniae (strain ATCC 29342 / M129 / Subtype 1) (Mycoplasmoides pneumoniae).